The primary structure comprises 316 residues: Malate dehydrogenase (316 aa).

NAD(+) is bound by residues 12–17 (GAGNIG) and aspartate 36. Positions 85 and 91 each coordinate substrate. Residues asparagine 98 and 121–123 (VTN) contribute to the NAD(+) site. Positions 123 and 154 each coordinate substrate. Histidine 178 serves as the catalytic Proton acceptor.

It belongs to the LDH/MDH superfamily. MDH type 3 family.

The catalysed reaction is (S)-malate + NAD(+) = oxaloacetate + NADH + H(+). Catalyzes the reversible oxidation of malate to oxaloacetate. The polypeptide is Malate dehydrogenase (Wolbachia sp. subsp. Brugia malayi (strain TRS)).